We begin with the raw amino-acid sequence, 478 residues long: Probable cytosolic Fe-S cluster assembly factor AAEL012261 (478 aa).

Residues C23, C69, C72, C75, C189, C245, C396, and C400 each coordinate [4Fe-4S] cluster.

Belongs to the NARF family.

In terms of biological role, component of the cytosolic iron-sulfur (Fe/S) protein assembly machinery. Required for maturation of extramitochondrial Fe/S proteins. This chain is Probable cytosolic Fe-S cluster assembly factor AAEL012261, found in Aedes aegypti (Yellowfever mosquito).